The sequence spans 222 residues: Pyridoxine/pyridoxamine 5'-phosphate oxidase (222 aa).

FMN contacts are provided by residues 69–74 (RMVLLK), 84–85 (YT), K91, and Q113. Residue K74 participates in substrate binding. Substrate-binding residues include Y131, R135, and S139. Residues 148 to 149 (QS) and W193 each bind FMN. 199–201 (RLH) contributes to the substrate binding site. R203 contributes to the FMN binding site.

This sequence belongs to the pyridoxamine 5'-phosphate oxidase family. In terms of assembly, homodimer. The cofactor is FMN.

The enzyme catalyses pyridoxamine 5'-phosphate + O2 + H2O = pyridoxal 5'-phosphate + H2O2 + NH4(+). The catalysed reaction is pyridoxine 5'-phosphate + O2 = pyridoxal 5'-phosphate + H2O2. Its pathway is cofactor metabolism; pyridoxal 5'-phosphate salvage; pyridoxal 5'-phosphate from pyridoxamine 5'-phosphate: step 1/1. The protein operates within cofactor metabolism; pyridoxal 5'-phosphate salvage; pyridoxal 5'-phosphate from pyridoxine 5'-phosphate: step 1/1. Catalyzes the oxidation of either pyridoxine 5'-phosphate (PNP) or pyridoxamine 5'-phosphate (PMP) into pyridoxal 5'-phosphate (PLP). The sequence is that of Pyridoxine/pyridoxamine 5'-phosphate oxidase from Maricaulis maris (strain MCS10) (Caulobacter maris).